The following is a 198-amino-acid chain: HTH-type transcriptional regulator BetI (198 aa).

The region spanning 8 to 68 (PLRRRELIDA…ATMRHLLREL (61 aa)) is the HTH tetR-type domain. The segment at residues 31 to 50 (TVAQIAHEAGVSPALAHHYF) is a DNA-binding region (H-T-H motif).

The protein operates within amine and polyamine biosynthesis; betaine biosynthesis via choline pathway [regulation]. In terms of biological role, repressor involved in the biosynthesis of the osmoprotectant glycine betaine. It represses transcription of the choline transporter BetT and the genes of BetAB involved in the synthesis of glycine betaine. In Brucella melitensis biotype 2 (strain ATCC 23457), this protein is HTH-type transcriptional regulator BetI.